Reading from the N-terminus, the 270-residue chain is Thiazole synthase (270 aa).

The Schiff-base intermediate with DXP role is filled by K112. 1-deoxy-D-xylulose 5-phosphate contacts are provided by residues G173, 199–200 (AG), and 221–222 (NS).

It belongs to the ThiG family. As to quaternary structure, homotetramer. Forms heterodimers with either ThiH or ThiS.

The protein resides in the cytoplasm. The catalysed reaction is [ThiS sulfur-carrier protein]-C-terminal-Gly-aminoethanethioate + 2-iminoacetate + 1-deoxy-D-xylulose 5-phosphate = [ThiS sulfur-carrier protein]-C-terminal Gly-Gly + 2-[(2R,5Z)-2-carboxy-4-methylthiazol-5(2H)-ylidene]ethyl phosphate + 2 H2O + H(+). Its pathway is cofactor biosynthesis; thiamine diphosphate biosynthesis. Catalyzes the rearrangement of 1-deoxy-D-xylulose 5-phosphate (DXP) to produce the thiazole phosphate moiety of thiamine. Sulfur is provided by the thiocarboxylate moiety of the carrier protein ThiS. In vitro, sulfur can be provided by H(2)S. The protein is Thiazole synthase of Pseudomonas entomophila (strain L48).